Reading from the N-terminus, the 132-residue chain is UPF0201 protein MTH_433 (132 aa).

This sequence belongs to the UPF0201 family.

The protein is UPF0201 protein MTH_433 of Methanothermobacter thermautotrophicus (strain ATCC 29096 / DSM 1053 / JCM 10044 / NBRC 100330 / Delta H) (Methanobacterium thermoautotrophicum).